The sequence spans 815 residues: Bifunctional purine biosynthetic protein purD (815 aa).

The interval 6-452 is GARS; that stretch reads NILVIGSGSR…YRKDIGQKAL (447 aa). Residues 113-343 form the ATP-grasp domain; it reads KDFMARNNIP…LFEIVLACIE (231 aa). 139–200 lines the ATP pocket; it reads IESLNYKIVL…EEFLDGEECS (62 aa). 2 residues coordinate Mg(2+): Glu-313 and Asn-315. Residues 469 to 801 are AIRS; that stretch reads VSYSESGVDI…KVYKIGKIIN (333 aa).

In the N-terminal section; belongs to the GARS family. It in the C-terminal section; belongs to the AIR synthase family. Requires Mg(2+) as cofactor. The cofactor is Mn(2+).

The protein localises to the cytoplasm. The protein resides in the cytosol. It catalyses the reaction 5-phospho-beta-D-ribosylamine + glycine + ATP = N(1)-(5-phospho-beta-D-ribosyl)glycinamide + ADP + phosphate + H(+). It carries out the reaction 2-formamido-N(1)-(5-O-phospho-beta-D-ribosyl)acetamidine + ATP = 5-amino-1-(5-phospho-beta-D-ribosyl)imidazole + ADP + phosphate + H(+). The protein operates within purine metabolism; IMP biosynthesis via de novo pathway; 5-amino-1-(5-phospho-D-ribosyl)imidazole from N(2)-formyl-N(1)-(5-phospho-D-ribosyl)glycinamide: step 2/2. Its pathway is purine metabolism; IMP biosynthesis via de novo pathway; N(1)-(5-phospho-D-ribosyl)glycinamide from 5-phospho-alpha-D-ribose 1-diphosphate: step 2/2. Its function is as follows. Catalyzes the second and fifth step in the 'de novo' purine biosynthesis pathway; contains phosphoribosylamine--glycine ligase (GARS) and phosphoribosylformylglycinamidine cyclo-ligase (AIRS) activities. The sequence is that of Bifunctional purine biosynthetic protein purD (purD) from Dictyostelium discoideum (Social amoeba).